Consider the following 275-residue polypeptide: DNA repair protein RecO (275 aa).

The tract at residues 1 to 38 (MTDEADADPQPFAAPPATGAPAADKPARKPRRAAPRTS) is disordered. Over residues 8 to 24 (DPQPFAAPPATGAPAAD) the composition is skewed to low complexity.

This sequence belongs to the RecO family.

In terms of biological role, involved in DNA repair and RecF pathway recombination. The chain is DNA repair protein RecO from Burkholderia pseudomallei (strain 1710b).